A 578-amino-acid chain; its full sequence is Dystrotelin (578 aa).

A ZZ-type zinc finger spans residues 223-279 (THPARCTLCRTFPITGLRYRCLKCLNFDICQMCFLSGLHSKSHQKSHPVIEHCIQMS). Cys-228, Cys-231, Cys-243, Cys-246, Cys-252, Cys-255, His-265, and His-269 together coordinate Zn(2+). Residues 322-351 (HHAQARLLKKQLNQYKDKLQAIYTSQEERI) are a coiled coil. Residues 382-475 (RLQPPGPSSS…QSQTQKMPQK (94 aa)) are disordered. 2 stretches are compositionally biased toward basic and acidic residues: residues 399-410 (KVDHSSTEKVPK) and 431-451 (PKLD…HALR). Polar residues predominate over residues 455 to 472 (SPETTLHSTRAQSQTQKM). Positions 503–537 (ALAAVEKKEAGNIKERKDELEEEELQELLSKLMDA) form a coiled coil.

It is found in the cell membrane. The sequence is that of Dystrotelin (DYTN) from Homo sapiens (Human).